An 878-amino-acid polypeptide reads, in one-letter code: Aminopeptidase M1-A (878 aa).

The tract at residues 105-212 is required for membrane association; the sequence is VGEGTLVIAF…MSTYLVAVIV (108 aa). Substrate is bound by residues Glu-145 and 278–282; that span reads GAMEN. Residue His-314 coordinates Zn(2+). The active-site Proton acceptor is the Glu-315. The Zn(2+) site is built by His-318 and Glu-337. The Dileucine internalization motif signature appears at 727 to 728; that stretch reads LL.

Belongs to the peptidase M1 family. Homodimer. It depends on Zn(2+) as a cofactor.

The protein localises to the membrane. It is found in the microsome membrane. Its subcellular location is the cytoplasm. The enzyme catalyses Release of an N-terminal amino acid, Xaa-|-Yaa- from a peptide, amide or arylamide. Xaa is preferably Ala, but may be most amino acids including Pro (slow action). When a terminal hydrophobic residue is followed by a prolyl residue, the two may be released as an intact Xaa-Pro dipeptide.. The chain is Aminopeptidase M1-A from Oryza sativa subsp. japonica (Rice).